We begin with the raw amino-acid sequence, 320 residues long: Malate dehydrogenase (320 aa).

NAD(+) contacts are provided by residues 10–15 (GAGQIG) and Asp-34. Arg-83 and Arg-89 together coordinate substrate. NAD(+) contacts are provided by residues Asn-96 and 119 to 121 (ITN). Substrate-binding residues include Asn-121 and Arg-152. Residue His-176 is the Proton acceptor of the active site.

The protein belongs to the LDH/MDH superfamily. MDH type 3 family.

It carries out the reaction (S)-malate + NAD(+) = oxaloacetate + NADH + H(+). Catalyzes the reversible oxidation of malate to oxaloacetate. This chain is Malate dehydrogenase, found in Methylorubrum extorquens (strain CM4 / NCIMB 13688) (Methylobacterium extorquens).